The sequence spans 378 residues: Putative UDP-N-acetylglucosamine 2-epimerase (378 aa).

Belongs to the UDP-N-acetylglucosamine 2-epimerase family.

The protein localises to the cytoplasm. It carries out the reaction UDP-N-acetyl-alpha-D-glucosamine = UDP-N-acetyl-alpha-D-mannosamine. This is Putative UDP-N-acetylglucosamine 2-epimerase from Thermotoga maritima (strain ATCC 43589 / DSM 3109 / JCM 10099 / NBRC 100826 / MSB8).